The primary structure comprises 102 residues: Small ribosomal subunit protein uS10 (102 aa).

Belongs to the universal ribosomal protein uS10 family. In terms of assembly, part of the 30S ribosomal subunit.

Involved in the binding of tRNA to the ribosomes. In Methanosphaera stadtmanae (strain ATCC 43021 / DSM 3091 / JCM 11832 / MCB-3), this protein is Small ribosomal subunit protein uS10.